Reading from the N-terminus, the 274-residue chain is MGTLSVNQNKLQKRLRRLAGEAITDYNMIEDGDKVMVCLSGGKDSYTMLDVLLHLQKVAPITFEIVAVNMDQKQPGFPEHVLPAYLKELGVEYHIVEKDTYSVVKELVPEGKTTCSLCSRLRRGTLYTFADEIGATKMALGHHRDDIVETFFLNMFFNGALKGMPPKLRADDGRNVVIRPLAYCSERDIQAYSDMKAFPIIPCNLCGSQENLQRQVVKDMLVEWERKHPGRTESIFRALQNVAPSQLADRNLFDFTSLKIDENATPRFLDVLNI.

A PP-loop motif motif is present at residues 40–45 (SGGKDS). [4Fe-4S] cluster contacts are provided by Cys115, Cys118, and Cys206.

Belongs to the TtcA family. As to quaternary structure, homodimer. The cofactor is Mg(2+). Requires [4Fe-4S] cluster as cofactor.

It is found in the cytoplasm. It carries out the reaction cytidine(32) in tRNA + S-sulfanyl-L-cysteinyl-[cysteine desulfurase] + AH2 + ATP = 2-thiocytidine(32) in tRNA + L-cysteinyl-[cysteine desulfurase] + A + AMP + diphosphate + H(+). It functions in the pathway tRNA modification. Catalyzes the ATP-dependent 2-thiolation of cytidine in position 32 of tRNA, to form 2-thiocytidine (s(2)C32). The sulfur atoms are provided by the cysteine/cysteine desulfurase (IscS) system. This is tRNA-cytidine(32) 2-sulfurtransferase from Pseudomonas putida (strain ATCC 47054 / DSM 6125 / CFBP 8728 / NCIMB 11950 / KT2440).